The following is a 485-amino-acid chain: Protein adenylyltransferase Fic (485 aa).

Residues 21–43 (YRFVLFFIAGSLAAFAFHALTSS) traverse the membrane as a helical segment. 2 TPR repeats span residues 107 to 140 (AMGA…APKH) and 141 to 175 (PEVL…SPSN). The Inhibitory (S/T)XXXE(G/N) motif signature appears at 232 to 237 (SVGIEG). Residues E236 and 317 to 320 (VGGH) contribute to the ATP site. A Fido domain is found at 286-421 (ITLKDILELH…IRPFVRFIAD (136 aa)). Residue H364 is part of the active site. Residues 368–375 (DGNGRTSR), 400–401 (YY), and N408 each bind ATP.

The protein belongs to the fic family. As to quaternary structure, homodimer.

It is found in the membrane. The enzyme catalyses L-tyrosyl-[protein] + ATP = O-(5'-adenylyl)-L-tyrosyl-[protein] + diphosphate. It carries out the reaction L-threonyl-[protein] + ATP = 3-O-(5'-adenylyl)-L-threonyl-[protein] + diphosphate. The catalysed reaction is 3-O-(5'-adenylyl)-L-threonyl-[protein] + H2O = L-threonyl-[protein] + AMP + H(+). With respect to regulation, the side chain of Glu-236 determines which of the two opposing activities (AMPylase or de-AMPylase) will take place. In response to endoplasmic reticulum stress, mediates de-AMPylase activity. Adenylyltransferase activity is inhibited by the inhibitory helix present at the N-terminus: Glu-236 binds ATP and competes with ATP-binding at Arg-375, thereby preventing adenylyltransferase activity. In unstressed cells, disengagement of Glu-236 promotes adenylyltransferase activity. Activation dissociates ATP-binding from Glu-236, allowing ordered binding of the entire ATP moiety with the alpha-phosphate in an orientation that is productive for accepting an incoming target hydroxyl side chain. Protein that can both mediate the addition of adenosine 5'-monophosphate (AMP) to specific residues of target proteins (AMPylation), and the removal of the same modification from target proteins (de-AMPylation), depending on the context. The side chain of Glu-236 determines which of the two opposing activities (AMPylase or de-AMPylase) will take place. Acts as a key regulator of the unfolded protein response (UPR) by mediating AMPylation or de-AMPylation of Hsc70-3/BiP. In unstressed cells, acts as an adenylyltransferase by mediating AMPylation of Hsc70-3/BiP at 'Thr-518', thereby inactivating it. In response to endoplasmic reticulum stress, acts as a phosphodiesterase by mediating removal of ATP (de-AMPylation) from Hsc70-3/BiP at 'Thr-518', leading to restore HSPA5/BiP activity. The sequence is that of Protein adenylyltransferase Fic from Drosophila virilis (Fruit fly).